A 289-amino-acid polypeptide reads, in one-letter code: Thioredoxin-like protein 1 (289 aa).

The Thioredoxin domain occupies 2 to 109 (VGVKPVGSDP…EEKIKQHLEN (108 aa)). Cys34 and Cys37 form a disulfide bridge. Ser113 carries the phosphoserine modification. Residues 115 to 285 (EDTDIPKGYM…NDFKRVVGKK (171 aa)) enclose the PITH domain.

As to quaternary structure, component of the 19S regulatory cap of the 26S proteasome. Interacts with PSMD14/RPN11. Interacts with, and reduces EEF1A1. In terms of tissue distribution, ubiquitous.

The protein localises to the cytoplasm. Its subcellular location is the nucleus. Functionally, active thioredoxin with a redox potential of about -250 mV. This is Thioredoxin-like protein 1 (TXNL1) from Homo sapiens (Human).